The primary structure comprises 907 residues: Translation initiation factor IF-2 (907 aa).

The interval 26–317 (DAGMKKSSSD…KPKSMQHGFD (292 aa)) is disordered. Basic and acidic residues-rich tracts occupy residues 28–44 (GMKK…EKQK) and 101–248 (SAIE…DTDY). Residues 299-308 (KGGRKGKLSK) show a composition bias toward basic residues. The region spanning 406–575 (PRAPVVTIMG…LLQAEVLELT (170 aa)) is the tr-type G domain. The tract at residues 415–422 (GHVDHGKT) is G1. 415–422 (GHVDHGKT) contacts GTP. The tract at residues 440–444 (GITQH) is G2. The segment at 461–464 (DTPG) is G3. Residues 461-465 (DTPGH) and 515-518 (NKID) each bind GTP. The interval 515–518 (NKID) is G4. The segment at 551-553 (SAK) is G5.

The protein belongs to the TRAFAC class translation factor GTPase superfamily. Classic translation factor GTPase family. IF-2 subfamily.

The protein resides in the cytoplasm. In terms of biological role, one of the essential components for the initiation of protein synthesis. Protects formylmethionyl-tRNA from spontaneous hydrolysis and promotes its binding to the 30S ribosomal subunits. Also involved in the hydrolysis of GTP during the formation of the 70S ribosomal complex. The protein is Translation initiation factor IF-2 of Vibrio vulnificus (strain CMCP6).